Here is a 386-residue protein sequence, read N- to C-terminus: IgA receptor (386 aa).

The N-terminal stretch at Met1–Ala41 is a signal peptide. Residues Ala42 to Gln152 are igA-binding. Composition is skewed to basic and acidic residues over residues Tyr79–Gln88, Gln97–Glu128, Glu134–Ile166, Leu174–Ile201, Leu209–Lys221, Glu233–Ile243, and Leu251–Ala267. Disordered regions lie at residues Tyr79–Lys221 and Glu233–Asp268. C repeat units follow at residues Gln158–His192, Gln193–Leu227, and Gln235–Leu269. D repeat units follow at residues Ala302–Glu307, Ala308–Glu313, Ala316–Glu321, and Ala323–Asn328. Positions Ala323–Ala360 are disordered. Polar residues predominate over residues Ala339 to Thr359. The LPXTG sorting signal motif lies at Leu353–Gly357. The residue at position 356 (Thr356) is a Pentaglycyl murein peptidoglycan amidated threonine. The propeptide at Gly357–Asn386 is removed by sortase.

The protein belongs to the M protein family.

The protein localises to the secreted. Its subcellular location is the cell wall. In terms of biological role, binds IgA of both subclasses, and also binds polyclonal IgG weakly. The protein is IgA receptor (arp4) of Streptococcus pyogenes.